Here is a 186-residue protein sequence, read N- to C-terminus: Pyridoxal 5'-phosphate synthase subunit PdxT (186 aa).

An L-glutamine-binding site is contributed by 47–49 (GES). The active-site Nucleophile is the Cys79. Residues Arg106 and 134 to 135 (IR) each bind L-glutamine. Residues His170 and Glu172 each act as charge relay system in the active site.

The protein belongs to the glutaminase PdxT/SNO family. In the presence of PdxS, forms a dodecamer of heterodimers. Only shows activity in the heterodimer.

It carries out the reaction aldehydo-D-ribose 5-phosphate + D-glyceraldehyde 3-phosphate + L-glutamine = pyridoxal 5'-phosphate + L-glutamate + phosphate + 3 H2O + H(+). The enzyme catalyses L-glutamine + H2O = L-glutamate + NH4(+). The protein operates within cofactor biosynthesis; pyridoxal 5'-phosphate biosynthesis. In terms of biological role, catalyzes the hydrolysis of glutamine to glutamate and ammonia as part of the biosynthesis of pyridoxal 5'-phosphate. The resulting ammonia molecule is channeled to the active site of PdxS. The polypeptide is Pyridoxal 5'-phosphate synthase subunit PdxT (Methanothrix thermoacetophila (strain DSM 6194 / JCM 14653 / NBRC 101360 / PT) (Methanosaeta thermophila)).